Reading from the N-terminus, the 4885-residue chain is Centrosome-associated protein CEP530 (4885 aa).

The stretch at 1437–1528 (VAEYEAETRG…GREKDQLRSE (92 aa)) forms a coiled coil.

Its subcellular location is the cytoplasm. The protein resides in the cytoskeleton. The protein localises to the microtubule organizing center. It localises to the centrosome. Its function is as follows. Required for proper nuclei segregation during the cell division. Plays a role in coordination of karyokinesis and cytokinesis during the tachyzoite cell cycle. This chain is Centrosome-associated protein CEP530, found in Toxoplasma gondii (strain ATCC 50611 / Me49).